We begin with the raw amino-acid sequence, 197 residues long: Holliday junction branch migration complex subunit RuvA (197 aa).

Residues 1–64 (MIASVRGTLI…EDALTLYGFK (64 aa)) form a domain I region. The segment at 65 to 145 (TVEQRQLFET…GLPVAPGVSP (81 aa)) is domain II. A flexible linker region spans residues 146–153 (AVAAVNAE). A domain III region spans residues 153–197 (ELSEMLVSLGFSSAEASTAIAALPPDAPLDLEERLRLALRYFGAR).

Belongs to the RuvA family. In terms of assembly, homotetramer. Forms an RuvA(8)-RuvB(12)-Holliday junction (HJ) complex. HJ DNA is sandwiched between 2 RuvA tetramers; dsDNA enters through RuvA and exits via RuvB. An RuvB hexamer assembles on each DNA strand where it exits the tetramer. Each RuvB hexamer is contacted by two RuvA subunits (via domain III) on 2 adjacent RuvB subunits; this complex drives branch migration. In the full resolvosome a probable DNA-RuvA(4)-RuvB(12)-RuvC(2) complex forms which resolves the HJ.

The protein resides in the cytoplasm. The RuvA-RuvB-RuvC complex processes Holliday junction (HJ) DNA during genetic recombination and DNA repair, while the RuvA-RuvB complex plays an important role in the rescue of blocked DNA replication forks via replication fork reversal (RFR). RuvA specifically binds to HJ cruciform DNA, conferring on it an open structure. The RuvB hexamer acts as an ATP-dependent pump, pulling dsDNA into and through the RuvAB complex. HJ branch migration allows RuvC to scan DNA until it finds its consensus sequence, where it cleaves and resolves the cruciform DNA. The sequence is that of Holliday junction branch migration complex subunit RuvA from Roseiflexus castenholzii (strain DSM 13941 / HLO8).